We begin with the raw amino-acid sequence, 240 residues long: Thiopurine S-methyltransferase (240 aa).

24–35 (WKDKWVTRHISF) is a binding site for S-adenosyl-L-methionine. Phe35 is a binding site for substrate. The residue at position 53 (Lys53) is an N6-acetyllysine. Residues Leu64, Glu85, 129-130 (SI), and Arg147 each bind S-adenosyl-L-methionine.

The protein belongs to the class I-like SAM-binding methyltransferase superfamily. TPMT family. Monomer.

Its subcellular location is the cytoplasm. It carries out the reaction S-adenosyl-L-methionine + a thiopurine = S-adenosyl-L-homocysteine + a thiopurine S-methylether.. The catalysed reaction is mercaptopurine + S-adenosyl-L-methionine = 6-methylthiopurine + S-adenosyl-L-homocysteine + H(+). Its function is as follows. Catalyzes the S-methylation of thiopurine drugs such as 6-mercaptopurine (also called mercaptopurine, 6-MP or its brand name Purinethol) using S-adenosyl-L-methionine as the methyl donor. TPMT activity modulates the cytotoxic effects of thiopurine prodrugs. A natural substrate for this enzyme has yet to be identified. This chain is Thiopurine S-methyltransferase (Tpmt), found in Mus spretus (Western Mediterranean mouse).